The chain runs to 465 residues: Cysteine--tRNA ligase (465 aa).

Cys29 provides a ligand contact to Zn(2+). Positions 31–41 (PTVYNYIHIGN) match the 'HIGH' region motif. Residues Cys209, His234, and Glu238 each contribute to the Zn(2+) site. Residues 266–270 (KMSKS) carry the 'KMSKS' region motif. Lys269 contributes to the ATP binding site. Phosphoserine is present on Ser270.

Belongs to the class-I aminoacyl-tRNA synthetase family. In terms of assembly, monomer. The cofactor is Zn(2+).

It is found in the cytoplasm. It catalyses the reaction tRNA(Cys) + L-cysteine + ATP = L-cysteinyl-tRNA(Cys) + AMP + diphosphate. The sequence is that of Cysteine--tRNA ligase from Bacillus anthracis (strain A0248).